The following is a 556-amino-acid chain: Potassium-transporting ATPase potassium-binding subunit (556 aa).

10 helical membrane passes run 6 to 26, 65 to 85, 133 to 153, 176 to 196, 249 to 269, 283 to 303, 378 to 398, 419 to 439, 483 to 503, and 526 to 546; these read AGLI…VPLG, GVLA…LVQG, GLAV…VALV, LRIL…GGAI, PTAW…FSLP, YAIA…MLWF, GLYG…LMVG, YFLV…ALPG, ALGL…LALA, and FVGM…LPML.

The protein belongs to the KdpA family. As to quaternary structure, the system is composed of three essential subunits: KdpA, KdpB and KdpC.

It is found in the cell membrane. Part of the high-affinity ATP-driven potassium transport (or Kdp) system, which catalyzes the hydrolysis of ATP coupled with the electrogenic transport of potassium into the cytoplasm. This subunit binds the extracellular potassium ions and delivers the ions to the membrane domain of KdpB through an intramembrane tunnel. This Mycobacterium avium (strain 104) protein is Potassium-transporting ATPase potassium-binding subunit.